Here is a 307-residue protein sequence, read N- to C-terminus: UAP56-interacting factor (307 aa).

A compositionally biased stretch (low complexity) spans 1 to 25 (MSGFGAAALLSGSSAAAGTRSGSSD). Disordered regions lie at residues 1–28 (MSGFGAAALLSGSSAAAGTRSGSSDSLE) and 41–85 (NKKE…KNHL). A UAP56-binding motif motif is present at residues 26–44 (SLEKIDMSLDDIIKLNKKE). Polar residues predominate over residues 57 to 78 (LQQNRTQQFRTPGSKWGIQQQK).

Belongs to the UIF family. As to expression, widely expressed.

The protein localises to the nucleus. It is found in the nucleoplasm. Its subcellular location is the nucleus speckle. Required for mRNA export from the nucleus to the cytoplasm. Acts as an adapter that uses the DDX39B/UAP56-NFX1 pathway to ensure efficient mRNA export and delivering to the nuclear pore. In Gallus gallus (Chicken), this protein is UAP56-interacting factor (FYTTD1).